The sequence spans 212 residues: Small ribosomal subunit protein uS3 (212 aa).

One can recognise a KH type-2 domain in the interval isoleucine 39–arginine 108.

Belongs to the universal ribosomal protein uS3 family. As to quaternary structure, part of the 30S ribosomal subunit. Forms a tight complex with proteins S10 and S14.

In terms of biological role, binds the lower part of the 30S subunit head. Binds mRNA in the 70S ribosome, positioning it for translation. The chain is Small ribosomal subunit protein uS3 from Aquifex aeolicus (strain VF5).